A 104-amino-acid polypeptide reads, in one-letter code: Large ribosomal subunit protein uL24 (104 aa).

The protein belongs to the universal ribosomal protein uL24 family. As to quaternary structure, part of the 50S ribosomal subunit.

Its function is as follows. One of two assembly initiator proteins, it binds directly to the 5'-end of the 23S rRNA, where it nucleates assembly of the 50S subunit. Functionally, one of the proteins that surrounds the polypeptide exit tunnel on the outside of the subunit. The protein is Large ribosomal subunit protein uL24 of Pseudomonas savastanoi pv. phaseolicola (strain 1448A / Race 6) (Pseudomonas syringae pv. phaseolicola (strain 1448A / Race 6)).